A 697-amino-acid polypeptide reads, in one-letter code: Methionine--tRNA ligase (697 aa).

Residues 11–21 (PYANGPIHLGH) carry the 'HIGH' region motif. The Zn(2+) site is built by Cys-142, Cys-145, Cys-155, and Cys-158. The 'KMSKS' region signature appears at 343–347 (KMSKS). Position 346 (Lys-346) interacts with ATP. The tRNA-binding domain maps to 595–697 (DFMKVEMTVA…DECKVGDKLA (103 aa)).

This sequence belongs to the class-I aminoacyl-tRNA synthetase family. MetG type 1 subfamily. As to quaternary structure, homodimer. It depends on Zn(2+) as a cofactor.

It is found in the cytoplasm. The enzyme catalyses tRNA(Met) + L-methionine + ATP = L-methionyl-tRNA(Met) + AMP + diphosphate. In terms of biological role, is required not only for elongation of protein synthesis but also for the initiation of all mRNA translation through initiator tRNA(fMet) aminoacylation. The sequence is that of Methionine--tRNA ligase from Psychrobacter sp. (strain PRwf-1).